Here is a 382-residue protein sequence, read N- to C-terminus: MSIYTRPVMLLLCGLLLLTLAIAVLNTLVPLWLAQANLPTWQVGMVSSSYFTGNLVGTLFTGYLIKRIGFNRSYYLASLIFAAGCVGLGVMVGFWSWMSWRFIAGIGCAMIWVVVESALMCSGTSHNRGRLLAAYMMVYYMGTFLGQLLVSKVSGELLHVLPWVTGMILAGILPLLFTRIVNQQTQARHSSSISAMLKLRQARLGVNGCIISGIVLGSLYGLMPLYLKHQGMANASIGFWMAVLVSAGILGQWPMGRLADKFGRLLVLRVQVFVVILGSIAMLTQAAMAPALFILGAAGFTLYPVAMAWACEKVEHHQLVAMNQALLLSYTVGSLLGPSFAAMLMQNYSDNLLFIMIASVSFIYLLMLLRNVGQTPNPVAHI.

Residues 1-7 (MSIYTRP) lie on the Cytoplasmic side of the membrane. A helical membrane pass occupies residues 8–28 (VMLLLCGLLLLTLAIAVLNTL). At 29–44 (VPLWLAQANLPTWQVG) the chain is on the periplasmic side. A helical membrane pass occupies residues 45-65 (MVSSSYFTGNLVGTLFTGYLI). Residues 66-74 (KRIGFNRSY) lie on the Cytoplasmic side of the membrane. The chain crosses the membrane as a helical span at residues 75-95 (YLASLIFAAGCVGLGVMVGFW). Topologically, residues 96–101 (SWMSWR) are periplasmic. A helical membrane pass occupies residues 102 to 122 (FIAGIGCAMIWVVVESALMCS). At 123–130 (GTSHNRGR) the chain is on the cytoplasmic side. The chain crosses the membrane as a helical span at residues 131–151 (LLAAYMMVYYMGTFLGQLLVS). At 152-156 (KVSGE) the chain is on the periplasmic side. The chain crosses the membrane as a helical span at residues 157-177 (LLHVLPWVTGMILAGILPLLF). The Cytoplasmic portion of the chain corresponds to 178 to 203 (TRIVNQQTQARHSSSISAMLKLRQAR). Residues 204-224 (LGVNGCIISGIVLGSLYGLMP) form a helical membrane-spanning segment. Residues 225 to 230 (LYLKHQ) lie on the Periplasmic side of the membrane. A helical transmembrane segment spans residues 231 to 251 (GMANASIGFWMAVLVSAGILG). The Cytoplasmic portion of the chain corresponds to 252-269 (QWPMGRLADKFGRLLVLR). 2 helical membrane passes run 270–290 (VQVFVVILGSIAMLTQAAMAP) and 291–311 (ALFILGAAGFTLYPVAMAWAC). At 312–324 (EKVEHHQLVAMNQ) the chain is on the cytoplasmic side. Residues 325–345 (ALLLSYTVGSLLGPSFAAMLM) traverse the membrane as a helical segment. Over 346–348 (QNY) the chain is Periplasmic. The chain crosses the membrane as a helical span at residues 349–369 (SDNLLFIMIASVSFIYLLMLL). At 370-382 (RNVGQTPNPVAHI) the chain is on the cytoplasmic side.

This sequence belongs to the major facilitator superfamily. YcaD (TC 2.A.1.26) family.

It localises to the cell inner membrane. This is an uncharacterized protein from Salmonella typhi.